Here is a 306-residue protein sequence, read N- to C-terminus: Agmatinase (306 aa).

H126, D149, H151, D153, D230, and D232 together coordinate Mn(2+).

This sequence belongs to the arginase family. Agmatinase subfamily. Requires Mn(2+) as cofactor.

The catalysed reaction is agmatine + H2O = urea + putrescine. It participates in amine and polyamine biosynthesis; putrescine biosynthesis via agmatine pathway; putrescine from agmatine: step 1/1. Its function is as follows. Catalyzes the formation of putrescine from agmatine. This Escherichia coli O1:K1 / APEC protein is Agmatinase.